The chain runs to 596 residues: Elongation factor 4 (596 aa).

Residues 2 to 184 (KHIRNFSIIA…MIVKDVPPPV (183 aa)) enclose the tr-type G domain. GTP is bound by residues 14–19 (DHGKST) and 131–134 (NKID).

It belongs to the TRAFAC class translation factor GTPase superfamily. Classic translation factor GTPase family. LepA subfamily.

Its subcellular location is the cell inner membrane. It carries out the reaction GTP + H2O = GDP + phosphate + H(+). Functionally, required for accurate and efficient protein synthesis under certain stress conditions. May act as a fidelity factor of the translation reaction, by catalyzing a one-codon backward translocation of tRNAs on improperly translocated ribosomes. Back-translocation proceeds from a post-translocation (POST) complex to a pre-translocation (PRE) complex, thus giving elongation factor G a second chance to translocate the tRNAs correctly. Binds to ribosomes in a GTP-dependent manner. In Pseudoalteromonas translucida (strain TAC 125), this protein is Elongation factor 4.